Reading from the N-terminus, the 57-residue chain is Small ribosomal subunit protein eS27 (57 aa).

Zn(2+)-binding residues include cysteine 10, cysteine 13, cysteine 29, and cysteine 32. A C4-type zinc finger spans residues 10–32; it reads CGDCENEQVVFGKASSVVSCAVC.

The protein belongs to the eukaryotic ribosomal protein eS27 family. Part of the 30S ribosomal subunit. Zn(2+) is required as a cofactor.

The chain is Small ribosomal subunit protein eS27 from Halorubrum lacusprofundi (strain ATCC 49239 / DSM 5036 / JCM 8891 / ACAM 34).